Here is a 276-residue protein sequence, read N- to C-terminus: NH(3)-dependent NAD(+) synthetase (276 aa).

Position 43-50 (43-50 (GISGGVDS)) interacts with ATP. Aspartate 49 contributes to the Mg(2+) binding site. Arginine 146 provides a ligand contact to deamido-NAD(+). Threonine 166 lines the ATP pocket. Glutamate 171 is a Mg(2+) binding site. Residues lysine 179 and aspartate 186 each contribute to the deamido-NAD(+) site. The ATP site is built by lysine 195 and threonine 217. 266 to 267 (HK) is a deamido-NAD(+) binding site.

The protein belongs to the NAD synthetase family. As to quaternary structure, homodimer.

The catalysed reaction is deamido-NAD(+) + NH4(+) + ATP = AMP + diphosphate + NAD(+) + H(+). Its pathway is cofactor biosynthesis; NAD(+) biosynthesis; NAD(+) from deamido-NAD(+) (ammonia route): step 1/1. Catalyzes the ATP-dependent amidation of deamido-NAD to form NAD. Uses ammonia as a nitrogen source. The protein is NH(3)-dependent NAD(+) synthetase of Shewanella woodyi (strain ATCC 51908 / MS32).